The primary structure comprises 451 residues: 3-phosphoshikimate 1-carboxyvinyltransferase (451 aa).

The 3-phosphoshikimate site is built by Lys30, Ser31, and Arg35. Lys30 lines the phosphoenolpyruvate pocket. Gly103 and Arg131 together coordinate phosphoenolpyruvate. Ser176, Gln178, Asp329, and Lys356 together coordinate 3-phosphoshikimate. A phosphoenolpyruvate-binding site is contributed by Gln178. Asp329 serves as the catalytic Proton acceptor. Arg360 and Arg404 together coordinate phosphoenolpyruvate.

This sequence belongs to the EPSP synthase family. Monomer.

It is found in the cytoplasm. The catalysed reaction is 3-phosphoshikimate + phosphoenolpyruvate = 5-O-(1-carboxyvinyl)-3-phosphoshikimate + phosphate. It participates in metabolic intermediate biosynthesis; chorismate biosynthesis; chorismate from D-erythrose 4-phosphate and phosphoenolpyruvate: step 6/7. Its function is as follows. Catalyzes the transfer of the enolpyruvyl moiety of phosphoenolpyruvate (PEP) to the 5-hydroxyl of shikimate-3-phosphate (S3P) to produce enolpyruvyl shikimate-3-phosphate and inorganic phosphate. This chain is 3-phosphoshikimate 1-carboxyvinyltransferase, found in Parvibaculum lavamentivorans (strain DS-1 / DSM 13023 / NCIMB 13966).